Consider the following 323-residue polypeptide: Global nitrogen regulator NrpRI (323 aa).

The interval 11-76 (IEIMRVIHES…TLTDLGENEM (66 aa)) is winged helix-turn-helix. The tract at residues 86–323 (GFVISRIEEM…MLDYQTMKEI (238 aa)) is NRD.

Belongs to the NrpR family. Forms a complex with NrpRII and the general archaeal transcription factors TBP and TFB. Interacts directly with NrpRII.

Under nitrogen limitation, binding of 2-oxoglutarate to the NrpRI/NrpRII complex decreases the binding affinity of NrpRI to DNA as well as the binding affinity of NrpRII to TBP and TFB, which leads to removal of the complex from the operator, RNA polymerase recruitment and initiation of transcription. Its function is as follows. Plays a major role in nitrogen regulation. Under nitrogen sufficiency, binds to the nifH and the glnk1 promoters, leading to repression of the transcription of the genes. The protein is Global nitrogen regulator NrpRI of Methanosarcina mazei (strain ATCC BAA-159 / DSM 3647 / Goe1 / Go1 / JCM 11833 / OCM 88) (Methanosarcina frisia).